A 321-amino-acid polypeptide reads, in one-letter code: Bifunctional ligase/repressor BirA (321 aa).

A DNA-binding region (H-T-H motif) is located at residues G22–Q41. Positions L67 to E254 constitute a BPL/LPL catalytic domain. Residues S89–N91, Q112, R116–R118, and K183 each bind biotin.

It belongs to the biotin--protein ligase family. Monomer in solution. Interacts with BCCP. Homodimerizes to bind DNA. Interaction with the corepressor bio-5'-AMP increases dimerization.

It catalyses the reaction biotin + L-lysyl-[protein] + ATP = N(6)-biotinyl-L-lysyl-[protein] + AMP + diphosphate + H(+). Its activity is regulated as follows. The switch between the enzymatic activity and the repressor activity is regulated by cellular demand for biotin. The switch occurs by swapping of protein interaction partners by holoBirA. In conditions of high biotin demand, holoBirA associates with apoBCCP to transfer biotin. In conditions of low biotin demand, holoBirA dimerizes, binds DNA and represses transcription of the biotin operon. Its function is as follows. Acts both as a biotin--[acetyl-CoA-carboxylase] ligase and a biotin-operon repressor. In the presence of ATP, BirA activates biotin to form the BirA-biotinyl-5'-adenylate (BirA-bio-5'-AMP or holoBirA) complex. HoloBirA can either transfer the biotinyl moiety to the biotin carboxyl carrier protein (BCCP) subunit of acetyl-CoA carboxylase, or bind to the biotin operator site and inhibit transcription of the operon. In Escherichia coli (strain K12), this protein is Bifunctional ligase/repressor BirA.